The sequence spans 265 residues: Mlc titration factor A (265 aa).

Zn(2+)-binding residues include His111, His148, His152, and Glu211.

It belongs to the MtfA family. In terms of assembly, interacts with Mlc. It depends on Zn(2+) as a cofactor.

The protein localises to the cytoplasm. Functionally, involved in the modulation of the activity of the glucose-phosphotransferase system (glucose-PTS). Interacts with the transcriptional repressor Mlc, preventing its interaction with DNA and leading to the modulation of expression of genes regulated by Mlc, including ptsG, which encodes the PTS system glucose-specific EIICB component. Shows zinc-dependent metallopeptidase activity. This chain is Mlc titration factor A, found in Cronobacter sakazakii (strain ATCC BAA-894) (Enterobacter sakazakii).